Here is a 352-residue protein sequence, read N- to C-terminus: Methylthioribose-1-phosphate isomerase (352 aa).

Substrate is bound by residues 49-51 (RGA), Arg93, and Gln202. Asp243 functions as the Proton donor in the catalytic mechanism. Residue 253-254 (NK) participates in substrate binding.

It belongs to the eIF-2B alpha/beta/delta subunits family. MtnA subfamily.

It carries out the reaction 5-(methylsulfanyl)-alpha-D-ribose 1-phosphate = 5-(methylsulfanyl)-D-ribulose 1-phosphate. Its pathway is amino-acid biosynthesis; L-methionine biosynthesis via salvage pathway; L-methionine from S-methyl-5-thio-alpha-D-ribose 1-phosphate: step 1/6. Its function is as follows. Catalyzes the interconversion of methylthioribose-1-phosphate (MTR-1-P) into methylthioribulose-1-phosphate (MTRu-1-P). The protein is Methylthioribose-1-phosphate isomerase of Magnetococcus marinus (strain ATCC BAA-1437 / JCM 17883 / MC-1).